Here is a 197-residue protein sequence, read N- to C-terminus: NADH-quinone oxidoreductase subunit B (197 aa).

4 residues coordinate [4Fe-4S] cluster: C63, C64, C129, and C159.

The protein belongs to the complex I 20 kDa subunit family. In terms of assembly, NDH-1 is composed of 14 different subunits. Subunits NuoB, C, D, E, F, and G constitute the peripheral sector of the complex. [4Fe-4S] cluster serves as cofactor.

Its subcellular location is the cell inner membrane. The catalysed reaction is a quinone + NADH + 5 H(+)(in) = a quinol + NAD(+) + 4 H(+)(out). Functionally, NDH-1 shuttles electrons from NADH, via FMN and iron-sulfur (Fe-S) centers, to quinones in the respiratory chain. The immediate electron acceptor for the enzyme in this species is believed to be a menaquinone. Couples the redox reaction to proton translocation (for every two electrons transferred, four hydrogen ions are translocated across the cytoplasmic membrane), and thus conserves the redox energy in a proton gradient. In Bacteroides thetaiotaomicron (strain ATCC 29148 / DSM 2079 / JCM 5827 / CCUG 10774 / NCTC 10582 / VPI-5482 / E50), this protein is NADH-quinone oxidoreductase subunit B.